Reading from the N-terminus, the 236-residue chain is MQNLNDPKIIVALDFPSQNPALALADQLDPAKCRLKVGKELFTRSGPDLVKALQSRGFDIFLDLKFHDIPNTTSAAVAAAAELGVWMVNVHASGGEKMMVACRERLESFGNDRPLLIAVTVLTSMSDEDLAGIGIASSAEAHVSRLATLTKNSGLDGVVCSAQEAPRLKAEQGSDFQLITPGIRPLTADKGDQQRIMTPTDALKAGSDYLVIGRPITQAPDPLAALESIHAEVVAV.

Residues aspartate 14, lysine 36, 63–72 (DLKFHDIPNT), threonine 123, arginine 184, glutamine 193, glycine 213, and arginine 214 each bind substrate. The Proton donor role is filled by lysine 65.

This sequence belongs to the OMP decarboxylase family. Type 1 subfamily. As to quaternary structure, homodimer.

The catalysed reaction is orotidine 5'-phosphate + H(+) = UMP + CO2. The protein operates within pyrimidine metabolism; UMP biosynthesis via de novo pathway; UMP from orotate: step 2/2. Its function is as follows. Catalyzes the decarboxylation of orotidine 5'-monophosphate (OMP) to uridine 5'-monophosphate (UMP). This Marinobacter nauticus (strain ATCC 700491 / DSM 11845 / VT8) (Marinobacter aquaeolei) protein is Orotidine 5'-phosphate decarboxylase.